The sequence spans 79 residues: UPF0180 protein BCB4264_A1446 (79 aa).

Belongs to the UPF0180 family.

In Bacillus cereus (strain B4264), this protein is UPF0180 protein BCB4264_A1446.